The following is a 160-amino-acid chain: MSTLKKPDLSDPQLRAKLAKGMGHNYYGEPAWPNDLLYIFPVVIVGTIALCVGLAVLDPAMIGEPADPFATPLEILPEWYFWPVFQILRVVPNKLLGIVAMASIPLGLMLVPFIESVNKFQNPFRRPVATAVFLFGTAVTLWLGIGATLPIDKSLTFGLF.

The next 3 membrane-spanning stretches (helical) occupy residues 36–56, 95–115, and 131–151; these read LLYI…GLAV, LLGI…PFIE, and AVFL…TLPI.

Belongs to the cytochrome b family. PetD subfamily. As to quaternary structure, the 4 large subunits of the cytochrome b6-f complex are cytochrome b6, subunit IV (17 kDa polypeptide, PetD), cytochrome f and the Rieske protein, while the 4 small subunits are PetG, PetL, PetM and PetN. The complex functions as a dimer.

It is found in the cellular thylakoid membrane. Component of the cytochrome b6-f complex, which mediates electron transfer between photosystem II (PSII) and photosystem I (PSI), cyclic electron flow around PSI, and state transitions. The sequence is that of Cytochrome b6-f complex subunit 4 from Trichodesmium erythraeum (strain IMS101).